Here is a 435-residue protein sequence, read N- to C-terminus: Cytidine monophosphate-N-acetylneuraminic acid hydroxylase (435 aa).

Belongs to the CMP-Neu5Ac hydroxylase family. Requires [2Fe-2S] cluster as cofactor.

The protein resides in the cytoplasm. It catalyses the reaction CMP-N-acetyl-beta-neuraminate + 2 Fe(II)-[cytochrome b5] + O2 + 2 H(+) = CMP-N-glycoloyl-beta-neuraminate + 2 Fe(III)-[cytochrome b5] + H2O. Its pathway is amino-sugar metabolism; N-acetylneuraminate metabolism. Its function is as follows. Sialic acids are components of carbohydrate chains of glycoconjugates and are involved in cell-cell recognition and cell-pathogen interactions. Catalyzes the conversion of CMP-N-acetylneuraminic acid (CMP-Neu5Ac) into its hydroxylated derivative CMP-N-glycolylneuraminic acid (CMP-Neu5Gc), a sialic acid abundantly expressed at the surface of many cells. This is Cytidine monophosphate-N-acetylneuraminic acid hydroxylase from Sus scrofa (Pig).